The chain runs to 444 residues: Phosphoglucosamine mutase (444 aa).

Serine 102 serves as the catalytic Phosphoserine intermediate. Residues serine 102, aspartate 241, aspartate 243, and aspartate 245 each coordinate Mg(2+). Serine 102 carries the post-translational modification Phosphoserine.

Belongs to the phosphohexose mutase family. Requires Mg(2+) as cofactor. Activated by phosphorylation.

The enzyme catalyses alpha-D-glucosamine 1-phosphate = D-glucosamine 6-phosphate. Functionally, catalyzes the conversion of glucosamine-6-phosphate to glucosamine-1-phosphate. The sequence is that of Phosphoglucosamine mutase from Histophilus somni (strain 129Pt) (Haemophilus somnus).